Consider the following 146-residue polypeptide: Hemoglobin subunit beta (146 aa).

The Globin domain maps to 2-146; that stretch reads FLTPEENGHV…VANALAHKYH (145 aa). A Phosphothreonine modification is found at T12. S44 is subject to Phosphoserine. K59 is subject to N6-acetyllysine. Residue H63 participates in heme b binding. K82 carries the post-translational modification N6-acetyllysine. H92 is a heme b binding site. The residue at position 93 (C93) is an S-nitrosocysteine. N6-acetyllysine is present on K144.

It belongs to the globin family. As to quaternary structure, heterotetramer of two alpha chains and two beta chains. As to expression, red blood cells.

In terms of biological role, involved in oxygen transport from the lung to the various peripheral tissues. In Hapalemur griseus (Gray gentle lemur), this protein is Hemoglobin subunit beta (HBB).